The sequence spans 116 residues: Small ribosomal subunit protein uS11m (116 aa).

The protein belongs to the universal ribosomal protein uS11 family.

The protein resides in the mitochondrion. This is Small ribosomal subunit protein uS11m (RPS11) from Chondrus crispus (Carrageen Irish moss).